The following is a 130-amino-acid chain: Ribonuclease pancreatic (130 aa).

An N-terminal signal peptide occupies residues 1 to 6 (VQPSLG). Substrate is bound by residues Lys13 and Arg16. The active-site Proton acceptor is His18. 4 cysteine pairs are disulfide-bonded: Cys32/Cys90, Cys46/Cys101, Cys64/Cys116, and Cys71/Cys78. N-linked (GlcNAc...) asparagine glycosylation is present at Asn40. Residues 47–51 (KPVNT), Lys72, and Arg91 contribute to the substrate site. The active-site Proton donor is His125.

This sequence belongs to the pancreatic ribonuclease family. Monomer. Interacts with and forms tight 1:1 complexes with RNH1. Dimerization of two such complexes may occur. Interaction with RNH1 inhibits this protein. Pancreas.

Its subcellular location is the secreted. It carries out the reaction an [RNA] containing cytidine + H2O = an [RNA]-3'-cytidine-3'-phosphate + a 5'-hydroxy-ribonucleotide-3'-[RNA].. The enzyme catalyses an [RNA] containing uridine + H2O = an [RNA]-3'-uridine-3'-phosphate + a 5'-hydroxy-ribonucleotide-3'-[RNA].. In terms of biological role, endonuclease that catalyzes the cleavage of RNA on the 3' side of pyrimidine nucleotides. Acts on single-stranded and double-stranded RNA. The sequence is that of Ribonuclease pancreatic (RNASE1) from Cricetulus griseus (Chinese hamster).